The following is a 321-amino-acid chain: Collectin-43 (321 aa).

Positions 1–20 (MLPLPLSILLLLTQSQSFLG) are cleaved as a signal peptide. The interval 43 to 163 (PADSLRGHDG…GEKGARGETS (121 aa)) is disordered. The segment covering 47–65 (LRGHDGRDGKEGPQGEKGD) has biased composition (basic and acidic residues). The 114-residue stretch at 49–162 (GHDGRDGKEG…PGEKGARGET (114 aa)) folds into the Collagen-like domain. Gly residues-rich tracts occupy residues 100 to 109 (GPEGGVGAPG) and 124 to 133 (GTPGPGGAIG). The span at 147–159 (KGDRGDPGEKGAR) shows a compositional bias: basic and acidic residues. The 100-residue stretch at 222-321 (QLCREAKGQL…REERLVICEF (100 aa)) folds into the C-type lectin domain. 2 disulfides stabilise this stretch: Cys224-Cys319 and Cys297-Cys311.

This sequence belongs to the SFTPD family. In terms of assembly, oligomeric complex of 4 set of homotrimers. In terms of processing, hydroxylated. Liver specific.

The protein localises to the secreted. Functionally, lectin that binds to various sugars: mannose = ManNAc &gt; fucose &gt; GlcNAc &gt; glucose = maltose &gt; galactose &gt; lactose &gt; GalNAc. Could play a role in immune defense. The chain is Collectin-43 (CL43) from Bos taurus (Bovine).